A 137-amino-acid chain; its full sequence is Oleosin Ara h 11.0101 (137 aa).

At Ala2 the chain carries N-acetylalanine; alternate. The next 2 membrane-spanning stretches (helical) occupy residues 27-47 (AVVA…GTVI) and 55-75 (LFVI…LLGL).

The protein belongs to the oleosin family. Expressed in seeds (at protein level).

It localises to the lipid droplet. The protein localises to the membrane. Its function is as follows. May have a structural role to stabilize the lipid body during desiccation of the seed by preventing coalescence of the oil. Probably interacts with both lipid and phospholipid moieties of lipid bodies. May also provide recognition signals for specific lipase anchorage in lipolysis during seedling growth. This is Oleosin Ara h 11.0101 from Arachis hypogaea (Peanut).